A 554-amino-acid chain; its full sequence is Bifunctional epoxide hydrolase 2 (554 aa).

Residues 1–224 form a phosphatase region; that stretch reads MALRVAAFDL…KVTGTQFPEA (224 aa). 2 residues coordinate Mg(2+): aspartate 9 and aspartate 11. Position 55 is an N6-succinyllysine (lysine 55). Phosphate is bound at residue 123–124; sequence TN. N6-acetyllysine; alternate is present on lysine 176. N6-succinyllysine; alternate is present on lysine 176. A Mg(2+)-binding site is contributed by aspartate 185. N6-acetyllysine is present on residues lysine 191 and lysine 215. Residues 233–554 are epoxide hydrolase; that stretch reads NDVSHGYVTV…VQNPSVTSKI (322 aa). One can recognise an AB hydrolase-1 domain in the interval 257 to 530; that stretch reads PALCLCHGFP…CGHWTQIEKP (274 aa). The active-site Nucleophile is aspartate 333. Serine 368 bears the Phosphoserine mark. Lysine 371 bears the N6-succinyllysine mark. Tyrosine 381 lines the substrate pocket. Lysine 420 and lysine 454 each carry N6-succinyllysine. Tyrosine 465 (proton donor) is an active-site residue. Lysine 504 carries the post-translational modification N6-succinyllysine. N6-acetyllysine; alternate is present on lysine 508. Lysine 508 is modified (N6-succinyllysine; alternate). Cysteine 521 carries the S-(15-deoxy-Delta12,14-prostaglandin J2-9-yl)cysteine lipid modification. Histidine 523 acts as the Proton acceptor in catalysis. The Microbody targeting signal motif lies at 552–554; the sequence is SKI. Lysine 553 carries the post-translational modification N6-succinyllysine.

The protein belongs to the AB hydrolase superfamily. Epoxide hydrolase family. Homodimer. Mg(2+) is required as a cofactor. In terms of processing, the N-terminus is blocked. The covalent modification of cysteine by 15-deoxy-Delta12,14-prostaglandin-J2 is autocatalytic and reversible. It may occur as an alternative to other cysteine modifications, such as S-nitrosylation and S-palmitoylation. In terms of tissue distribution, detected in liver, intestine, ovary and kidney. Detected at low levels in heart and muscle.

The protein resides in the cytoplasm. Its subcellular location is the peroxisome. The catalysed reaction is an epoxide + H2O = an ethanediol. It catalyses the reaction (9S,10S)-10-hydroxy-9-(phosphooxy)octadecanoate + H2O = (9S,10S)-9,10-dihydroxyoctadecanoate + phosphate. The enzyme catalyses 8-hydroxy-(11S,12S)-epoxy-(5Z,9E,14Z)-eicosatrienoate + H2O = (8,11R,12S)-trihydroxy-(5Z,9E,14Z)-eicosatrienoate. It carries out the reaction 10-hydroxy-(11S,12S)-epoxy- (5Z,8Z,14Z)-eicosatrienoate + H2O = (10,11S,12R)-trihydroxy-(5Z,8Z,14Z)-eicosatrienoate. The catalysed reaction is (8S,9R)-epoxy-(5Z,11Z,14Z)-eicosatrienoate + H2O = (8S,9S)-dihydroxy-(5Z,11Z,14Z)-eicosatrienoate. It catalyses the reaction (11S,12R)-epoxy-(5Z,8Z,14Z)-eicosatrienoate + H2O = (11R,12R)-dihydroxy-(5Z,8Z,14Z)-eicosatrienoate. The enzyme catalyses (11S,12R)-epoxy-(5Z,8Z,14Z)-eicosatrienoate + H2O = (11S,12S)-dihydroxy-(5Z,8Z,14Z)-eicosatrienoate. It carries out the reaction (14S,15R)-epoxy-(5Z,8Z,11Z)-eicosatrienoate + H2O = (14R,15R)-dihydroxy-(5Z,8Z,11Z)-eicosatrienoate. The catalysed reaction is (14S,15R)-epoxy-(5Z,8Z,11Z)-eicosatrienoate + H2O = (14S,15S)-dihydroxy-(5Z,8Z,11Z)-eicosatrienoate. It catalyses the reaction (11R,12S)-epoxy-(5Z,8Z,14Z)-eicosatrienoate + H2O = (11S,12S)-dihydroxy-(5Z,8Z,14Z)-eicosatrienoate. The enzyme catalyses (11R,12S)-epoxy-(5Z,8Z,14Z)-eicosatrienoate + H2O = (11R,12R)-dihydroxy-(5Z,8Z,14Z)-eicosatrienoate. It carries out the reaction (8S,9R)-epoxy-(5Z,11Z,14Z)-eicosatrienoate + H2O = (8R,9R)-dihydroxy-(5Z,11Z,14Z)-eicosatrienoate. The catalysed reaction is 12-phosphooxy-(9Z)-octadecenoate + H2O = 12-hydroxy-(9Z)-octadecenoate + phosphate. It catalyses the reaction 12-phosphooxy-(9E)-octadecenoate + H2O = 12-hydroxy-(9E)-octadecenoate + phosphate. The enzyme catalyses 12-(phosphooxy)octadecanoate + H2O = 12-hydroxyoctadecanoate + phosphate. It carries out the reaction 8,9-epoxy-(5Z,11Z,14Z)-eicosatrienoate + H2O = 8,9-dihydroxy-(5Z,11Z,14Z)-eicosatrienoate. The catalysed reaction is 11,12-epoxy-(5Z,8Z,14Z)-eicosatrienoate + H2O = 11,12-dihydroxy-(5Z,8Z,14Z)-eicosatrienoate. It catalyses the reaction 14,15-epoxy-(5Z,8Z,11Z)-eicosatrienoate + H2O = 14,15-dihydroxy-(5Z,8Z,11Z)-eicosatrienoate. The enzyme catalyses 9,10-epoxy-(12Z)-octadecenoate + H2O = 9,10-dihydroxy-(12Z)-octadecenoate. It carries out the reaction 1-tetradecanoyl-sn-glycerol 3-phosphate + H2O = 1-tetradecanoyl-sn-glycerol + phosphate. The catalysed reaction is 1-octadecanoyl-sn-glycero-3-phosphate + H2O = 1-octadecanoyl-sn-glycerol + phosphate. It catalyses the reaction 1-(5Z,8Z,11Z,14Z-eicosatetraenoyl)-sn-glycero-3-phosphate + H2O = 1-(5Z,8Z,11Z,14Z-eicosatetraenoyl)-sn-glycerol + phosphate. The enzyme catalyses 1-hexadecanoyl-sn-glycero-3-phosphate + H2O = 1-hexadecanoyl-sn-glycerol + phosphate. It carries out the reaction 1-(9Z-octadecenoyl)-sn-glycero-3-phosphate + H2O = 1-(9Z-octadecenoyl)-sn-glycerol + phosphate. The catalysed reaction is (14R,15S)-epoxy-(5Z,8Z,11Z)-eicosatrienoate + H2O = (14R,15R)-dihydroxy-(5Z,8Z,11Z)-eicosatrienoate. With respect to regulation, inhibited by 1-(1-acetylpiperidin-4-yl)-3-(4-(trifl uoromethoxy)phenyl)urea (TPAU), 1-cyclohexyl-3-dodecylurea (CDU), 12-(3-adamantan-1-yl-ureido)-dodecanoic acid (AUDA), 1-((3S, 5S, 7S)-adamantan-1-yl)-3-(5-(2-(2-ethoxyethoxy) ethoxy)pentyl)urea (AEPU), N-adamantyl-N[']-cyclohexyl urea (ACU), 4-(((1S, 4S)-4-(3-((3S, 5S, 7S)-adamantan-1-yl) ureido)cyclohexyl)oxy)benzoic acid (c-AUCB), 4-(((1R, 4R)-4-(3-((3S, 5S, 7S)-adamantan-1-yl)ureido)cyclohexyl)oxy)benzoic acid (t-AUCB), 4-(((1R, 4R)-4-(3-(4(trifluoromethoxy)phenyl)ureido)cyclohexyl)oxy)benzoic acid (t-TAUCB) and to a lesser extent by 8-(3-((3S, 5S, 7S)-adamantan-1-yl)ureido) octanoic acid (AUOA). Phosphatase activity is inhibited by dodecyl-phosphate, phospholipids such as phospho-lysophosphatidic acids and fatty acids such as palmitic acid and lauric acid. Functionally, bifunctional enzyme. The C-terminal domain has epoxide hydrolase activity and acts on epoxides (alkene oxides, oxiranes) and arene oxides. Plays a role in xenobiotic metabolism by degrading potentially toxic epoxides. Also determines steady-state levels of physiological mediators. In terms of biological role, bifunctional enzyme. The N-terminal domain has lipid phosphatase activity, with the highest activity towards threo-9,10-phosphonooxy-hydroxy-octadecanoic acid, followed by erythro-9,10-phosphonooxy-hydroxy-octadecanoic acid, 12-phosphonooxy-octadec-9Z-enoic acid and 12-phosphonooxy-octadec-9E-enoic acid. Has phosphatase activity toward lyso-glycerophospholipids with also some lower activity toward lysolipids of sphingolipid and isoprenoid phosphates. The sequence is that of Bifunctional epoxide hydrolase 2 from Mus musculus (Mouse).